We begin with the raw amino-acid sequence, 73 residues long: Gas vesicle protein M2 (73 aa).

It belongs to the gas vesicle GvpA family. As to quaternary structure, gvpF to GvpM interact with each other in vitro, and may form multi-subunit complex(es). Might interact with GvpA.

It localises to the gas vesicle. Proteins GvpF to GvpM might be involved in nucleating gas vesicle formation. A minor component of the gas vesicle. Gas vesicles are hollow, gas filled proteinaceous nanostructures found in several microbial planktonic microorganisms. They allow positioning of halobacteria at the optimal depth for growth in the poorly aerated, shallow brine pools of their habitat. In terms of biological role, expression of 2 c-vac DNA fragments containing 2 divergently transcribed regions (gvpE-gvpF-gvpG-gvpH-gvpI-gvpJ-gvpK-gvpL-gvpM and gvpA-gvpC-gvpN-gvpO) allows H.volcanii to produce gas vesicles. This is Gas vesicle protein M2 from Halobacterium salinarum (strain ATCC 700922 / JCM 11081 / NRC-1) (Halobacterium halobium).